Consider the following 104-residue polypeptide: uncharacterized protein (104 aa).

Positions 3–104 (VFEKIIQGEI…HFHILSGDKH (102 aa)) constitute an HIT domain. The Histidine triad motif signature appears at 93–97 (HLHFH).

This is an uncharacterized protein from Helicobacter pylori (strain J99 / ATCC 700824) (Campylobacter pylori J99).